The following is a 99-amino-acid chain: Protein IDA-LIKE 3 (99 aa).

The signal sequence occupies residues 1–32 (MSSRSHRSRKYQLTRTIPILVLLLVLLSCCNG). Residues 36–45 (TNVFNTSSPP) show a composition bias toward polar residues. 2 disordered regions span residues 36–58 (TNVFNTSSPPKQKDVVSPPHDHV) and 73–99 (SLPRQFPVPTSGPSRKHNEIGLSSTKT). The span at 46–58 (KQKDVVSPPHDHV) shows a compositional bias: basic and acidic residues.

Expressed in flowers and seedlings. Detected at the base of pedicel, in the floral abscission zone and in vascular tissues.

It is found in the secreted. The protein localises to the extracellular space. Functionally, may be involved in floral abscission. This is Protein IDA-LIKE 3 (IDL3) from Arabidopsis thaliana (Mouse-ear cress).